Consider the following 449-residue polypeptide: C4-dicarboxylate transport protein 1 (449 aa).

Helical transmembrane passes span 14-34 (SIFLQVVIGLVIGVICGVGIP), 47-67 (FIKLIKMLIALIVFCVVVNGI), 83-103 (SVIYFEILTTIALVLGLVVAY), 157-177 (ILQVLLFSVLFGSALNLVGEQ), 195-215 (IMGMIVRLAPLGVFGAVAFTT), 226-246 (LGALVLVFYATCLVFVMAVLG), 312-332 (FSIYLTLAVVFIAHVTGTPLA), 359-379 (VILAATLTAVPAIPVAGLVLV), and 385-405 (FMGIGRALTNLIGNCVATVTI).

The protein belongs to the dicarboxylate/amino acid:cation symporter (DAACS) (TC 2.A.23) family.

It is found in the cell inner membrane. In terms of biological role, responsible for the transport of dicarboxylates such as succinate, fumarate, and malate from the periplasm across the membrane. The sequence is that of C4-dicarboxylate transport protein 1 from Pseudomonas aeruginosa (strain UCBPP-PA14).